The primary structure comprises 464 residues: UPF0210 protein MA_1691 (464 aa).

It belongs to the UPF0210 family.

This is UPF0210 protein MA_1691 from Methanosarcina acetivorans (strain ATCC 35395 / DSM 2834 / JCM 12185 / C2A).